The primary structure comprises 97 residues: Coiled-coil domain-containing protein 167 (97 aa).

Residues 10–79 (GVALEIDGLE…LRQENRKNML (70 aa)) adopt a coiled-coil conformation. Residues 78–95 (MLLSVAIFILLTLVYAYW) form a helical membrane-spanning segment.

It localises to the membrane. This Homo sapiens (Human) protein is Coiled-coil domain-containing protein 167 (CCDC167).